The sequence spans 271 residues: 3-methyl-2-oxobutanoate hydroxymethyltransferase (271 aa).

Mg(2+) contacts are provided by aspartate 51 and aspartate 90. 3-methyl-2-oxobutanoate is bound by residues 51 to 52 (DS), aspartate 90, and lysine 119. Glutamate 121 is a binding site for Mg(2+). The Proton acceptor role is filled by glutamate 188.

Belongs to the PanB family. As to quaternary structure, homodecamer; pentamer of dimers. Mg(2+) serves as cofactor.

It is found in the cytoplasm. It carries out the reaction 3-methyl-2-oxobutanoate + (6R)-5,10-methylene-5,6,7,8-tetrahydrofolate + H2O = 2-dehydropantoate + (6S)-5,6,7,8-tetrahydrofolate. It functions in the pathway cofactor biosynthesis; (R)-pantothenate biosynthesis; (R)-pantoate from 3-methyl-2-oxobutanoate: step 1/2. Its function is as follows. Catalyzes the reversible reaction in which hydroxymethyl group from 5,10-methylenetetrahydrofolate is transferred onto alpha-ketoisovalerate to form ketopantoate. The protein is 3-methyl-2-oxobutanoate hydroxymethyltransferase of Aromatoleum aromaticum (strain DSM 19018 / LMG 30748 / EbN1) (Azoarcus sp. (strain EbN1)).